The primary structure comprises 281 residues: Pantothenate synthetase (281 aa).

30 to 37 (MGYLHEGH) serves as a coordination point for ATP. His-37 serves as the catalytic Proton donor. A (R)-pantoate-binding site is contributed by Gln-61. Gln-61 is a beta-alanine binding site. 147-150 (GEKD) is a binding site for ATP. Gln-153 is a binding site for (R)-pantoate. Residues Ile-176 and 184-187 (KSSR) each bind ATP.

Belongs to the pantothenate synthetase family. Homodimer.

It localises to the cytoplasm. The catalysed reaction is (R)-pantoate + beta-alanine + ATP = (R)-pantothenate + AMP + diphosphate + H(+). Its pathway is cofactor biosynthesis; (R)-pantothenate biosynthesis; (R)-pantothenate from (R)-pantoate and beta-alanine: step 1/1. In terms of biological role, catalyzes the condensation of pantoate with beta-alanine in an ATP-dependent reaction via a pantoyl-adenylate intermediate. The protein is Pantothenate synthetase of Clostridium botulinum (strain Langeland / NCTC 10281 / Type F).